Here is an 877-residue protein sequence, read N- to C-terminus: MDGPNSDRAHDRHAFDRVAACKARIQHNTAELAERFRTGTPVADLIRERTAFIDHLLSEAWDRRIGRGATDVALVAVGGYGRGELLLHSDVDLLILLDEAAPSSRKQDLSDFLRLLWDIGLKPGHSVRSPAECAEAARTDQTIITNLLEGRLLVGSAALWEAVRSETAPERMWSSAAFFEAKMAEQRIRYSKYHNTAYNLEPNVKEGPGGLRDIQLIGWIIRRHSDARGLQDLVAHGWLTDAEYRELKEAQAFLWRIRFALHALTGRCEDRLLFDYQRELAGLFGYRGETSNEVVEGFMQDYFRTVTGVERLNELLLQLFNEAVLHRDDAFSPTPVNDHFQAVNDYLEAVHPAVFREHPLALLEVFLILQKNSALEGVRAATIRLIRQHIHLIDDAFRNDPEACRLFMDILRQPGGVTHQLRRMNRYGVLAAYLPEFGRVVGRMQYDLFHVYTVDEHTLFVVRNLRRFALEEFQQENPLCYELFQLIEKPELLYIAALMHDIAKGSDGDHSEVGERIAEEFCRRHRIGPRETLLVKWLVRHHLVMSMTAQRKDLSDPEVIHEFAQIVRNQNTLNHLYLLTVADIRATNPSLWNSWKGALLQELYTSTSWTLRRGLDTPPDYAEQISAAKDEARTLLQRFGLAEDAITAVWENIGDDYFLRFLPEEIAWHTTAIAACRPEHLPLVLLRPESLRGSVEVFIYERNRDFLFAQTTAVLDQLGLTVLDAKIIASRQGFALLSFNVLERSGTAPEGLFRLVQICDRLKEALSGGGAPPPAVSRLATRQIRHFTVPTKVFFHDDPQNRFSILELIATDRPGLLSKVGQAFMRTGIRLHNAKISTVGSRAEDIFFITDREDRPLDGEADRAALRRVLIEFVGDQ.

Residues 1–335 are uridylyltransferase; the sequence is MDGPNSDRAH…HRDDAFSPTP (335 aa). A uridylyl-removing region spans residues 336–695; it reads VNDHFQAVND…LRPESLRGSV (360 aa). Residues 454 to 576 form the HD domain; sequence VDEHTLFVVR…VRNQNTLNHL (123 aa). ACT domains lie at 696–778 and 805–877; these read EVFI…AVSR and ILEL…VGDQ.

The protein belongs to the GlnD family. Requires Mg(2+) as cofactor.

The catalysed reaction is [protein-PII]-L-tyrosine + UTP = [protein-PII]-uridylyl-L-tyrosine + diphosphate. It catalyses the reaction [protein-PII]-uridylyl-L-tyrosine + H2O = [protein-PII]-L-tyrosine + UMP + H(+). With respect to regulation, uridylyltransferase (UTase) activity is inhibited by glutamine, while glutamine activates uridylyl-removing (UR) activity. Functionally, modifies, by uridylylation and deuridylylation, the PII regulatory proteins (GlnB and homologs), in response to the nitrogen status of the cell that GlnD senses through the glutamine level. Under low glutamine levels, catalyzes the conversion of the PII proteins and UTP to PII-UMP and PPi, while under higher glutamine levels, GlnD hydrolyzes PII-UMP to PII and UMP (deuridylylation). Thus, controls uridylylation state and activity of the PII proteins, and plays an important role in the regulation of nitrogen fixation and metabolism. This is Bifunctional uridylyltransferase/uridylyl-removing enzyme from Methylococcus capsulatus (strain ATCC 33009 / NCIMB 11132 / Bath).